Reading from the N-terminus, the 144-residue chain is Protein cornichon homolog 1 (144 aa).

Residues 1 to 10 (MAFTFAAFCY) lie on the Cytoplasmic side of the membrane. Residues 11–31 (MLALLLTAALIFFAIWHIIAF) traverse the membrane as a helical segment. Residues 32–56 (DELKTDYKNPIDQCNTLNPLVLPEY) lie on the Lumenal side of the membrane. A helical transmembrane segment spans residues 57–77 (LIHAFFCVMFLCAAEWLTLGL). Over 78 to 122 (NMPLLAYHIWRYMSRPVMSGPGLYDPTTIMNADILAYCQKEGWCK) the chain is Cytoplasmic. Residues 123–143 (LAFYLLAFFYYLYGMIYVLVS) traverse the membrane as a helical segment. Residue Ser-144 is a topological domain, lumenal.

This sequence belongs to the cornichon family. As to quaternary structure, interacts with AREG immature precursor and with immature TGFA, i.e. with a prosegment and lacking full N-glycosylation, but not with the fully N-glycosylated form. In the Golgi apparatus, may form a complex with GORASP55 and transmembrane TGFA.

The protein resides in the endoplasmic reticulum membrane. It localises to the golgi apparatus membrane. Functionally, involved in the selective transport and maturation of TGF-alpha family proteins. This Bos taurus (Bovine) protein is Protein cornichon homolog 1 (CNIH1).